Consider the following 426-residue polypeptide: Egl nine homolog 1 (426 aa).

Ala-2 carries the post-translational modification N-acetylalanine. The tract at residues 6 to 20 (GGPGGPSPSERDRQY) is required for nuclear export. Ser-12 carries the phosphoserine modification. Positions 21, 24, 33, 36, 42, 46, 54, and 58 each coordinate Zn(2+). Residues 21-58 (CELCGKMENLLRCSRCRSSFYCCKEHQRQDWKKHKLVC) form an MYND-type; atypical zinc finger. Disordered regions lie at residues 65–129 (LGHG…PCRA) and 160–184 (ANLYPPSNTPGDALSPGGGLRPNGQ). Residues 77 to 87 (PAPPAAVPPPR) are compositionally biased toward pro residues. A compositionally biased stretch (basic and acidic residues) spans 89-103 (GAREPRKAAARRDNA). Positions 120-129 (PAAAASPCRA) are enriched in low complexity. Ser-125 is modified (phosphoserine). S-nitrosocysteine occurs at positions 201 and 208. Positions 241–251 (VSQKSDSSKDI) are beta(2)beta(3) 'finger-like' loop. The Fe2OG dioxygenase domain occupies 291 to 392 (KINGRTKAMV…RYAITVWYFD (102 aa)). Cys-302 is modified (S-nitrosocysteine). Fe cation is bound by residues His-313 and Asp-315. S-nitrosocysteine is present on residues Cys-323 and Cys-326. His-374 is a binding site for Fe cation. 2-oxoglutarate is bound at residue Arg-383.

Monomer. Interacts with ING4; the interaction inhibits the hydroxylation of HIF alpha proteins. Interacts with PTGES3 (via PXLE motif); thereby recruiting EGLN1 to the HSP90 pathway to facilitate HIF alpha proteins hydroxylation. Interacts with LIMD1. Found in a complex composed of LIMD1, VHL, EGLN1/PHD2, ELOB and CUL2. Interacts with EPAS1. Interacts with CBFA2T3. Interacts with HIF1A. Requires Fe(2+) as cofactor. L-ascorbate serves as cofactor. In terms of processing, S-nitrosylation inhibits the enzyme activity up to 60% under aerobic conditions. Chelation of Fe(2+) has no effect on the S-nitrosylation. It is uncertain whether nitrosylation occurs on Cys-323 or Cys-326. In terms of tissue distribution, according to PubMed:11056053, widely expressed with highest levels in skeletal muscle and heart, moderate levels in pancreas, brain (dopaminergic neurons of adult and fetal substantia nigra) and kidney, and lower levels in lung and liver. According to PubMed:12351678 widely expressed with highest levels in brain, kidney and adrenal gland. Expressed in cardiac myocytes, aortic endothelial cells and coronary artery smooth muscle. According to PubMed:12788921; expressed in adult and fetal heart, brain, liver, lung, skeletal muscle and kidney. Also expressed in placenta. Highest levels in adult heart, brain, lung and liver and fetal brain, heart spleen and skeletal muscle.

It is found in the cytoplasm. It localises to the nucleus. It carries out the reaction L-prolyl-[hypoxia-inducible factor alpha subunit] + 2-oxoglutarate + O2 = trans-4-hydroxy-L-prolyl-[hypoxia-inducible factor alpha subunit] + succinate + CO2. Its activity is regulated as follows. Following exposure to hypoxia, activated in HeLa cells but not in cardiovascular cells. In terms of biological role, cellular oxygen sensor that catalyzes, under normoxic conditions, the post-translational formation of 4-hydroxyproline in hypoxia-inducible factor (HIF) alpha proteins. Hydroxylates a specific proline found in each of the oxygen-dependent degradation (ODD) domains (N-terminal, NODD, and C-terminal, CODD) of HIF1A. Also hydroxylates HIF2A. Has a preference for the CODD site for both HIF1A and HIF1B. Hydroxylated HIFs are then targeted for proteasomal degradation via the von Hippel-Lindau ubiquitination complex. Under hypoxic conditions, the hydroxylation reaction is attenuated allowing HIFs to escape degradation resulting in their translocation to the nucleus, heterodimerization with HIF1B, and increased expression of hypoxy-inducible genes. EGLN1 is the most important isozyme under normoxia and, through regulating the stability of HIF1, involved in various hypoxia-influenced processes such as angiogenesis in retinal and cardiac functionality. Target proteins are preferentially recognized via a LXXLAP motif. This chain is Egl nine homolog 1, found in Homo sapiens (Human).